The chain runs to 222 residues: MNHCLLAISAVYFKAKWLTPFEKEFTSDYPFYVSPTEMVDVSMMSMYGELFNHASVKESFGNFSIIELPYVGDTSMMVILPDKIDGLESIEQNLTDTNFKKWCNSLDAMFIDVHIPKFKVTGSYNLVDTLVKSGLTEVFGSTGDYSNMCNLDVSVDAMIHKTYIDVNEEYTEAAAATCALVSDCASTITNEFCVDHPFIYVIRHVDGKILFVGRYCSPTTNC.

The protein belongs to the serpin family. Poxviruses subfamily.

The protein is Putative serine proteinase inhibitor 2 homolog second part of Homo sapiens (Human).